The sequence spans 224 residues: MSKKTKVSMAVIRRLPRYHRYLEELLKNDVKRISSRELSEKMGVTASQIRQDLNNFGGFGQQGYGYNVEELYNNLTKILGLDKTYNTIIIGAGNLGQAIANYTSFEKSGFNLKGIFDINPRLFGLKIRDVEVMDIETVEDFIARNKIDIGILCIPKDNAQYTADRLVRAGIKAIWNFSPIDLKVPDDVILENVHLSDSLFTVSYRLNEEELFKKLKGETAKIDG.

A DNA-binding region (H-T-H motif) is located at residues 17 to 56 (RYHRYLEELLKNDVKRISSRELSEKMGVTASQIRQDLNNF). 91-96 (GAGNLG) is a binding site for NAD(+).

Belongs to the transcriptional regulatory Rex family. Homodimer.

Its subcellular location is the cytoplasm. In terms of biological role, modulates transcription in response to changes in cellular NADH/NAD(+) redox state. The chain is Redox-sensing transcriptional repressor Rex from Thermoanaerobacter pseudethanolicus (strain ATCC 33223 / 39E) (Clostridium thermohydrosulfuricum).